A 567-amino-acid chain; its full sequence is MGSAPDNDSTPLDGDFEREVYEALKLWKIPGIAIAVIDEESTWTEGYGIADLASSTKVEANTLFYGGSTTKAFTAALMSMLVEDNDRYPHVQWSTPVCELIRDDFVLGHPGRTADTTIEDILSHRTGMPGHDFSMGSVHAGQQATVQDVVRSLRFLPAAAPPRTTYIYNNAMYIVASHLIQTVTGEELRSLFQRYIWDPLGMSHTYLRLKDAVAGQEPLAKGYADESATDDDPQYEEVPWKDRPEISGAGAIISSVGDYAKWVHALMNPEASSSSSSSSDSTATTSLSAAICADVGTARTLIPPPSEPFLTPMAYCLGWNRYVYRGVEILTHDGGIDGFGAEIAMIPALKYGVVTMANSTYTSNFGGTCLVYKLIDDKLGIPAEDRYDWTQKYTDLVAQMDAYNANAVSYFYPTLPDPPRPGPTLPLAAYAGLYWHDGYGALELVLDAADGKLHATRTQAQYTTACALTFEHISGDFFTATVAVVGAQTVVPAEFALSPAGVPRAIGIGWEPHLGTEKRTWMRRVGADEAGRLLRGDQSHPHHAEAYVSYQREEAQLPEFLTSHLFV.

Belongs to the peptidase S12 family.

Its pathway is secondary metabolite biosynthesis. Functionally, hydrolase; part of the gene cluster that mediates the biosynthesis of the unguisins, gamma-aminobutyric acid (GABA)-containing fungal cyclic heptapeptides with the amino acid sequence cyclo-(D-Ala1-D-Val2-L-Phe3-D-Val4-D-Ala5-D-Trp6-GABA7) for unguisin A and cyclo-(D-Ala1-D-Val2-L-Leu3-D-Val4-D-Ala5-D-Trp6-GABA7) for unguisin B. Within the pathway, the hydrolase ungD catalyzes the hydrolysis between the D-tryptophan and GABA residues of unguisins A and B to produce the corresponding linear peptides. The alanine racemase ungC catalyzes the interconversion of L-alanine and D-alanine, providing the D-alanine which is accepted by the first adenylation domain of the nonribosomal peptide synthetase (NRPS) ungA. UngA is the main enzyme within the cluster which condenses the 7 residues using its respective 7 modules. The terminal condensation domain (Ct) is involved in cyclization with D-alanine and thereby releasing of unguisins A and B. The sequence is that of Unguisins hydrolase ungD from Aspergillus violaceofuscus (strain CBS 115571).